We begin with the raw amino-acid sequence, 437 residues long: MRFPRIIISSDRSNSGKTIISSALMRVLSRKMKVRGFKAGPDFIDPKYHTLAARVPSINLDLWLMGIEGVKKSLIRYGKGYDIGIIEGVMGLYDGINVNYSTYELSEVTKTPIILVVNCSNVSSTVGAIVKGLKDYRNARIRGVIFNQIGSETHYNYCKSSIKEVQVLGYIKYDRNFSVPSRHLGLFTTEDFKETENVLQSVSKAIEESVDIDKIIEIANSAEELQEVDEAISNDELDTKKGIAAIAYDSAFNFYYSENIDLLRYKYQIEFFSPLLNEKIDNPSLIYVGGGYPELHLNELEKSSSTIRWIKKEAEKGTKILAECGGLMYLSKEIIADKSYKMVNLFDISIKAKDKLTIGYTELDVLSDNILGRKGEVLRGHEFHVSKAINLGNDVKFSMKNRIGKGIWENKDGAIVYNTLASYSHFHFSSARGLLSF.

A GATase cobBQ-type domain is found at 243 to 433 (IAAIAYDSAF…SHFHFSSARG (191 aa)). Cys-324 serves as the catalytic Nucleophile.

It belongs to the CobB/CbiA family. The cofactor is Mg(2+).

The catalysed reaction is cob(II)yrinate + 2 L-glutamine + 2 ATP + 2 H2O = cob(II)yrinate a,c diamide + 2 L-glutamate + 2 ADP + 2 phosphate + 2 H(+). The protein operates within cofactor biosynthesis; adenosylcobalamin biosynthesis; cob(II)yrinate a,c-diamide from sirohydrochlorin (anaerobic route): step 10/10. Functionally, catalyzes the ATP-dependent amidation of the two carboxylate groups at positions a and c of cobyrinate, using either L-glutamine or ammonia as the nitrogen source. This chain is Cobyrinate a,c-diamide synthase, found in Sulfurisphaera tokodaii (strain DSM 16993 / JCM 10545 / NBRC 100140 / 7) (Sulfolobus tokodaii).